The primary structure comprises 188 residues: Methylamine dehydrogenase light chain (188 aa).

The segment at residues Met-1–Ala-57 is a signal peptide (tat-type signal). Disulfide bonds link Cys-80–Cys-145, Cys-86–Cys-118, Cys-93–Cys-178, Cys-95–Cys-143, Cys-103–Cys-134, and Cys-135–Cys-166. At Trp-114 the chain carries Tryptophylquinone. A cross-link (tryptophan tryptophylquinone (Trp-Trp)) is located at residues Trp-114–Trp-165.

The protein belongs to the aromatic amine dehydrogenase light chain family. Heterotetramer of two light and two heavy chains. The cofactor is tryptophan tryptophylquinone residue. Post-translationally, predicted to be exported by the Tat system. The position of the signal peptide cleavage has been experimentally proven. In terms of processing, tryptophan tryptophylquinone (TTQ) is formed by oxidation of the indole ring of a tryptophan to form tryptophylquinone followed by covalent cross-linking with another tryptophan residue.

Its subcellular location is the periplasm. It catalyses the reaction 2 oxidized [amicyanin] + methylamine + H2O = 2 reduced [amicyanin] + formaldehyde + NH4(+) + 2 H(+). The protein operates within one-carbon metabolism; methylamine degradation; formaldehyde from methylamine: step 1/1. Functionally, methylamine dehydrogenase carries out the oxidation of methylamine. Electrons are passed from methylamine dehydrogenase to amicyanin. The protein is Methylamine dehydrogenase light chain (mauA) of Paracoccus versutus (Thiobacillus versutus).